Reading from the N-terminus, the 261-residue chain is uncharacterized protein (261 aa).

41 to 48 (GKSGSGKS) contacts ATP.

It belongs to the IIV-6 075L family.

This is an uncharacterized protein from Invertebrate iridescent virus 3 (IIV-3).